The sequence spans 119 residues: Large ribosomal subunit protein bL20 (119 aa).

The protein belongs to the bacterial ribosomal protein bL20 family.

Functionally, binds directly to 23S ribosomal RNA and is necessary for the in vitro assembly process of the 50S ribosomal subunit. It is not involved in the protein synthesizing functions of that subunit. The sequence is that of Large ribosomal subunit protein bL20 from Thermoanaerobacter sp. (strain X514).